The sequence spans 308 residues: RNA pseudouridylate synthase domain-containing protein 1 (308 aa).

N-acetylmethionine is present on methionine 1. Aspartate 67 is an active-site residue. Residues 257 to 292 are disordered; the sequence is APDPDPSEGGPGPCSPCTPLPGPGRPPPPPETEVQR. Residues 269–287 are compositionally biased toward pro residues; the sequence is PCSPCTPLPGPGRPPPPPE.

This sequence belongs to the pseudouridine synthase RluA family.

The polypeptide is RNA pseudouridylate synthase domain-containing protein 1 (RPUSD1) (Bos taurus (Bovine)).